A 179-amino-acid chain; its full sequence is Warthog protein 3 (179 aa).

A signal peptide spans 1 to 19 (MLYHVEMFTIILLFGFSLA). N-linked (GlcNAc...) asparagine glycans are attached at residues asparagine 52 and asparagine 147.

In terms of tissue distribution, expressed in the trinucleate pharyngeal gland cell g1, seam cells and hypodermis.

The protein resides in the secreted. Intercellular signal essential for a variety of patterning events during development. This is Warthog protein 3 (wrt-3) from Caenorhabditis elegans.